A 308-amino-acid chain; its full sequence is Olfactory receptor 8D1 (308 aa).

The Extracellular portion of the chain corresponds to 1-25 (MTMENYSMAAQFVLDGLTQQAELQL). N-linked (GlcNAc...) asparagine glycosylation is present at Asn-5. Residues 26 to 46 (PLFLLFLGIYVVTVVGNLGMI) form a helical membrane-spanning segment. Residues 47–54 (LLIAVSPL) lie on the Cytoplasmic side of the membrane. A helical membrane pass occupies residues 55–75 (LHTPMYYFLSSLSFVDFCYSS). The Extracellular portion of the chain corresponds to 76 to 99 (VITPKMLVNFLGKKNTILYSECMV). Cysteines 97 and 189 form a disulfide. A helical membrane pass occupies residues 100–120 (QLFFFVVFVVAEGYLLTAMAY). Over 121–139 (DRYVAICSPLLYNAIMSSW) the chain is Cytoplasmic. Residues 140–160 (VCSLLVLAAFFLGFLSALTHT) form a helical membrane-spanning segment. Residues 161–197 (SAMMKLSFCKSHIINHYFCDVLPLLNLSCSNTHLNEL) lie on the Extracellular side of the membrane. The N-linked (GlcNAc...) asparagine glycan is linked to Asn-186. The helical transmembrane segment at 198–217 (LLFIIAGFNTLVPTLAVAVS) threads the bilayer. The Cytoplasmic segment spans residues 218-237 (YAFILYSILHIRSSEGRSKA). A helical membrane pass occupies residues 238–258 (FGTCSSHLMAVVIFFGSITFM). Residues 259–271 (YFKPPSSNSLDQE) lie on the Extracellular side of the membrane. The helical transmembrane segment at 272–292 (KVSSVFYTTVIPMLNPLIYSL) threads the bilayer. The Cytoplasmic segment spans residues 293 to 308 (RNKDVKKALRKVLVGK).

Belongs to the G-protein coupled receptor 1 family. In terms of tissue distribution, expressed in the tongue.

It is found in the cell membrane. Functionally, odorant receptor (Potential). May be involved in taste perception. The chain is Olfactory receptor 8D1 (OR8D1) from Homo sapiens (Human).